The chain runs to 690 residues: Eukaryotic translation initiation factor 3 subunit B (690 aa).

Residues 1-11 show a composition bias toward basic and acidic residues; that stretch reads MAKKKSEDHSG. The tract at residues 1-33 is disordered; it reads MAKKKSEDHSGADANDSDYNEEPNFDDPPNFVD. Residues 15–25 are compositionally biased toward acidic residues; sequence NDSDYNEEPNF. The region spanning 57–141 is the RRM domain; sequence SVVVVDNMPK…YTFAVNLFTD (85 aa). WD repeat units follow at residues 207–246, 292–331, 334–369, 442–484, and 530–575; these read TRER…KIQK, GDGM…LLDL, IKIP…TLMK, EIRE…KPSL, and PDHF…IKRT. Residues 613 to 646 are a coiled coil; the sequence is EQKDRLRLTRASKELLEKRAQLRETFMEYRNKRI.

This sequence belongs to the eIF-3 subunit B family. Component of the eukaryotic translation initiation factor 3 (eIF-3) complex. The eIF-3 complex interacts with pix. Interacts with mxt.

The protein resides in the cytoplasm. Its function is as follows. RNA-binding component of the eukaryotic translation initiation factor 3 (eIF-3) complex, which is involved in protein synthesis of a specialized repertoire of mRNAs and, together with other initiation factors, stimulates binding of mRNA and methionyl-tRNAi to the 40S ribosome. The eIF-3 complex specifically targets and initiates translation of a subset of mRNAs involved in cell proliferation. This is Eukaryotic translation initiation factor 3 subunit B from Drosophila grimshawi (Hawaiian fruit fly).